Here is a 434-residue protein sequence, read N- to C-terminus: Glutamate-1-semialdehyde 2,1-aminomutase 1 (434 aa).

Lys-268 is modified (N6-(pyridoxal phosphate)lysine).

The protein belongs to the class-III pyridoxal-phosphate-dependent aminotransferase family. HemL subfamily. Homodimer. Requires pyridoxal 5'-phosphate as cofactor.

The protein localises to the cytoplasm. It carries out the reaction (S)-4-amino-5-oxopentanoate = 5-aminolevulinate. Its pathway is porphyrin-containing compound metabolism; protoporphyrin-IX biosynthesis; 5-aminolevulinate from L-glutamyl-tRNA(Glu): step 2/2. The sequence is that of Glutamate-1-semialdehyde 2,1-aminomutase 1 from Shouchella clausii (strain KSM-K16) (Alkalihalobacillus clausii).